A 49-amino-acid chain; its full sequence is Large ribosomal subunit protein bL33B (49 aa).

This sequence belongs to the bacterial ribosomal protein bL33 family.

This Exiguobacterium sibiricum (strain DSM 17290 / CCUG 55495 / CIP 109462 / JCM 13490 / 255-15) protein is Large ribosomal subunit protein bL33B.